Consider the following 786-residue polypeptide: UPF0313 protein SO_0311 (786 aa).

One can recognise a Radical SAM core domain in the interval 371–649 (AYDMIKTSIN…KALLRYHDPA (279 aa)). Residues cysteine 385, cysteine 389, and cysteine 392 each coordinate [4Fe-4S] cluster. Disordered regions lie at residues 669-688 (NSPN…PKWM) and 698-786 (LTRF…QQAK). 2 stretches are compositionally biased toward basic and acidic residues: residues 679–688 (GRNERGPKWM) and 706–717 (FDERKGKGDAKG). Residues 718–731 (KPSASKPKGPKSGA) are compositionally biased toward low complexity. The segment covering 732–741 (NAPQSQQPKT) has biased composition (polar residues).

This sequence belongs to the UPF0313 family. [4Fe-4S] cluster serves as cofactor.

The protein is UPF0313 protein SO_0311 of Shewanella oneidensis (strain ATCC 700550 / JCM 31522 / CIP 106686 / LMG 19005 / NCIMB 14063 / MR-1).